Here is a 241-residue protein sequence, read N- to C-terminus: Major microneme antigen (241 aa).

The signal sequence occupies residues 1-34 (MTLPIHFPRCVLYGMASAVWSILFLHILVGDTMS). Positions 35-103 (AADALSWSGG…ATGRGPSFVH (69 aa)) are excised as a propeptide. Residues 64 to 83 (GKELEQQHGGEEQQMQRDTK) show a composition bias toward basic and acidic residues. Residues 64-90 (GKELEQQHGGEEQQMQRDTKPAAFSNP) form a disordered region. PAN domains lie at 112–181 (CFPH…PRSC) and 185–241 (CTDN…VERA). Intrachain disulfides connect cysteine 112/cysteine 181, cysteine 137/cysteine 159, cysteine 141/cysteine 147, cysteine 185/cysteine 189, cysteine 210/cysteine 230, and cysteine 214/cysteine 220. Residue serine 121 participates in a carbohydrate binding. A carbohydrate-binding residues include lysine 162, tyrosine 169, and aspartate 174.

This sequence belongs to the microneme antigen family. In terms of assembly, homodimer or heterodimer of major microneme antigen and microneme antigen. Contains six disulfide bonds.

It is found in the cytoplasmic vesicle. The protein localises to the secretory vesicle. Its subcellular location is the microneme. In terms of biological role, galactose-binding lectin. Plays a role in adhesion to the host cell. Has a potential role in invasion of host cells. The polypeptide is Major microneme antigen (Sarcocystis muris).